The primary structure comprises 699 residues: Osmotic avoidance abnormal protein 3 (699 aa).

The 324-residue stretch at 4-327 (SVRVAVRCRP…LRYANRAKNI (324 aa)) folds into the Kinesin motor domain. 87–94 (GQTGSGKT) lines the ATP pocket. The stretch at 339–523 (DALLREYQEE…EIEDLHGEFE (185 aa)) forms a coiled coil.

It belongs to the TRAFAC class myosin-kinesin ATPase superfamily. Kinesin family. Kinesin II subfamily. Expressed in an exclusive set of 26 chemosensory neurons whose dendritic endings are exposed to the external environment; six IL2 neurons of the inner labial sensilla, 8 pairs of amphid neurons in the head, and 2 pairs of phasmid neurons in the tail.

The protein resides in the cytoplasm. It localises to the cytoskeleton. The protein localises to the cell projection. Its subcellular location is the cilium. It is found in the cilium axoneme. The protein resides in the cilium basal body. Kinesin motor protein which is required for the anterograde intraflagellar transport (IFT) along the middle segment of the sensory neuron cilia together with the kinesin II motor complex (composed of klp-11, klp-20 and kap-1) and on its own, is required for IFT along the distal segment. In addition, regulates the length of cilia. May have a role during neurogenesis and axonal transport. This is Osmotic avoidance abnormal protein 3 from Caenorhabditis elegans.